The sequence spans 471 residues: 7-hydroxymethyl chlorophyll a reductase, chloroplastic (471 aa).

The transit peptide at 1–44 (MARCISFLSTSSSLPCATKPPCCSVSSVLPSSPSSHQCRGRKTS) directs the protein to the chloroplast.

This sequence belongs to the FrhB family. The cofactor is FAD. Iron-sulfur cluster is required as a cofactor.

It localises to the plastid. It is found in the chloroplast. The enzyme catalyses chlorophyll a + 2 oxidized [2Fe-2S]-[ferredoxin] + H2O = 7(1)-hydroxychlorophyll a + 2 reduced [2Fe-2S]-[ferredoxin] + 2 H(+). Its function is as follows. Probable iron-sulfur flavoprotein that converts 7-hydroxymethyl chlorophyll a to chlorophyll a using ferredoxin as a reducing equivalent. Catalyzes the reduction of a hydroxymethyl group to a methyl group. In Oryza sativa subsp. japonica (Rice), this protein is 7-hydroxymethyl chlorophyll a reductase, chloroplastic (HCAR).